Reading from the N-terminus, the 353-residue chain is MNGTEGPYFYIPMLNTTGIVRSPYEYPQYYLVNPAAYAALCAYMFLLILLGFPINFLTLYVTIEHKKLRTPLNYILLNLAVANLFMVFGGFTTTMYTSMHGYFVLGRLGCNLEGFFATLGGEIGLWSLVVLAVERWMVVCKPISNFRFTENHAIMGLGFTWFAASACAVPPLVGWSRYIPEGMQCSCGVDYYTRAEGFNNESFVVYMFVCHFLIPLIVVFFCYGRLLCAVKEAAAAQQESETTQRAEREVTRMVVIMVIAFLICWCPYAGVAWYIFSNQGSEFGPLFMTIPAFFAKSSSIYNPLIYIFMNKQFRHCMITTLCCGKNPFEEEEGSTTTSKTEASSASSSSVSPA.

Residues 1-36 lie on the Extracellular side of the membrane; it reads MNGTEGPYFYIPMLNTTGIVRSPYEYPQYYLVNPAA. Residues Asn-2 and Asn-15 are each glycosylated (N-linked (GlcNAc...) asparagine). A helical membrane pass occupies residues 37-61; the sequence is YAALCAYMFLLILLGFPINFLTLYV. At 62 to 73 the chain is on the cytoplasmic side; it reads TIEHKKLRTPLN. The helical transmembrane segment at 74-96 threads the bilayer; it reads YILLNLAVANLFMVFGGFTTTMY. The Extracellular segment spans residues 97–110; it reads TSMHGYFVLGRLGC. Cys-110 and Cys-187 are disulfide-bonded. Residues 111–133 form a helical membrane-spanning segment; the sequence is NLEGFFATLGGEIGLWSLVVLAV. The short motif at 134–136 is the 'Ionic lock' involved in activated form stabilization element; that stretch reads ERW. Topologically, residues 134–152 are cytoplasmic; it reads ERWMVVCKPISNFRFTENH. A helical transmembrane segment spans residues 153–173; that stretch reads AIMGLGFTWFAASACAVPPLV. Over 174–202 the chain is Extracellular; that stretch reads GWSRYIPEGMQCSCGVDYYTRAEGFNNES. N-linked (GlcNAc...) asparagine glycosylation is present at Asn-200. Residues 203-224 form a helical membrane-spanning segment; that stretch reads FVVYMFVCHFLIPLIVVFFCYG. Over 225–252 the chain is Cytoplasmic; that stretch reads RLLCAVKEAAAAQQESETTQRAEREVTR. The helical transmembrane segment at 253–274 threads the bilayer; that stretch reads MVVIMVIAFLICWCPYAGVAWY. Residues 275–286 are Extracellular-facing; the sequence is IFSNQGSEFGPL. A helical transmembrane segment spans residues 287–308; the sequence is FMTIPAFFAKSSSIYNPLIYIF. Lys-296 is modified (N6-(retinylidene)lysine). Residues 309–353 are Cytoplasmic-facing; that stretch reads MNKQFRHCMITTLCCGKNPFEEEEGSTTTSKTEASSASSSSVSPA. 2 S-palmitoyl cysteine lipidation sites follow: Cys-322 and Cys-323. Residues 329 to 353 form a disordered region; that stretch reads EEEEGSTTTSKTEASSASSSSVSPA. Positions 334-353 are enriched in low complexity; the sequence is STTTSKTEASSASSSSVSPA.

The protein belongs to the G-protein coupled receptor 1 family. Opsin subfamily. Phosphorylated on some or all of the serine and threonine residues present in the C-terminal region. Post-translationally, contains one covalently linked retinal chromophore.

Its subcellular location is the membrane. It localises to the cell projection. The protein resides in the cilium. It is found in the photoreceptor outer segment. Photoreceptor required for image-forming vision at low light intensity. While most salt water fish species use retinal as chromophore, most freshwater fish use 3-dehydroretinal, or a mixture of retinal and 3-dehydroretinal. Light-induced isomerization of 11-cis to all-trans retinal triggers a conformational change that activates signaling via G-proteins. Subsequent receptor phosphorylation mediates displacement of the bound G-protein alpha subunit by arrestin and terminates signaling. This Solea solea (Common sole) protein is Rhodopsin (rho).